The following is a 113-amino-acid chain: Hydrogenase maturation factor HypA 1 (113 aa).

Ni(2+) is bound at residue His2. Zn(2+) contacts are provided by Cys73, Cys76, Cys89, and Cys92.

This sequence belongs to the HypA/HybF family.

Its function is as follows. Involved in the maturation of [NiFe] hydrogenases. Required for nickel insertion into the metal center of the hydrogenase. The polypeptide is Hydrogenase maturation factor HypA 1 (Bradyrhizobium diazoefficiens (strain JCM 10833 / BCRC 13528 / IAM 13628 / NBRC 14792 / USDA 110)).